The following is a 139-amino-acid chain: Large ribosomal subunit protein uL16 (139 aa).

Residues 1–16 are compositionally biased toward basic residues; the sequence is MLIPRRVKHRKQHHPG. The segment at 1 to 25 is disordered; sequence MLIPRRVKHRKQHHPGRSGQATGGT.

The protein belongs to the universal ribosomal protein uL16 family. As to quaternary structure, part of the 50S ribosomal subunit.

Binds 23S rRNA and is also seen to make contacts with the A and possibly P site tRNAs. The chain is Large ribosomal subunit protein uL16 from Leifsonia xyli subsp. xyli (strain CTCB07).